The sequence spans 284 residues: ATP synthase subunit a (284 aa).

Helical transmembrane passes span 47–67 (AFHL…LIFF), 108–128 (VAPL…MDLV), 156–176 (VPTA…ILII), 233–253 (MIFI…SLPW), and 254–274 (AIFH…LVIV).

The protein belongs to the ATPase A chain family. As to quaternary structure, F-type ATPases have 2 components, CF(1) - the catalytic core - and CF(0) - the membrane proton channel. CF(1) has five subunits: alpha(3), beta(3), gamma(1), delta(1), epsilon(1). CF(0) has three main subunits: a(1), b(2) and c(9-12). The alpha and beta chains form an alternating ring which encloses part of the gamma chain. CF(1) is attached to CF(0) by a central stalk formed by the gamma and epsilon chains, while a peripheral stalk is formed by the delta and b chains.

It localises to the cell inner membrane. Key component of the proton channel; it plays a direct role in the translocation of protons across the membrane. In Ruthia magnifica subsp. Calyptogena magnifica, this protein is ATP synthase subunit a.